The primary structure comprises 301 residues: Polynucleotide kinase (301 aa).

Homotetramer. Mg(2+) is required as a cofactor.

It catalyses the reaction a 5'-end dephospho-2'-deoxyribonucleoside-DNA + ATP = a 5'-end 5'-phospho-2'-deoxyribonucleoside-DNA + ADP + H(+). The enzyme catalyses a 2'-deoxyribonucleoside 3'-phosphate + H2O = a 2'-deoxyribonucleoside + phosphate. Acts as a 5'-hydroxyl kinase, a 3'-phosphatase and a 2',3'-cyclic phosphodiesterase. Catalyzes the transfer of the terminal phosphate of ATP to the 5'-hydroxyl termini of ribo- and deoxyribonucleotides. In the presence of ADP the enzyme also catalyzes an exchange reaction. In the exchange reaction, an excess ADP causes the enzyme to transfer the 5' terminal phosphate from phosphorylated DNA to ADP. Involved in countering a host defense mechanism which activates T4-induced anticodon nuclease and shuts off viral translation. The polynucleotide kinase modifies the ends of nicked tRNA generated by the antiviral response of the host bacteria and facilitates repair by T4 RNA ligase. This chain is Polynucleotide kinase (pseT), found in Escherichia coli (Bacteriophage T4).